Here is a 227-residue protein sequence, read N- to C-terminus: 27 kDa A-type inclusion protein (227 aa).

The stretch at 4–210 forms a coiled coil; it reads MPKQREMRRL…AECRRGNNGS (207 aa).

The polypeptide is 27 kDa A-type inclusion protein (Bos taurus (Bovine)).